A 330-amino-acid chain; its full sequence is Phosphate acyltransferase (330 aa).

The protein belongs to the PlsX family. In terms of assembly, homodimer. Probably interacts with PlsY.

It localises to the cytoplasm. It catalyses the reaction a fatty acyl-[ACP] + phosphate = an acyl phosphate + holo-[ACP]. It participates in lipid metabolism; phospholipid metabolism. Functionally, catalyzes the reversible formation of acyl-phosphate (acyl-PO(4)) from acyl-[acyl-carrier-protein] (acyl-ACP). This enzyme utilizes acyl-ACP as fatty acyl donor, but not acyl-CoA. This Bacillus anthracis (strain A0248) protein is Phosphate acyltransferase.